Consider the following 357-residue polypeptide: 3-isopropylmalate dehydrogenase (357 aa).

76–89 (GPQWDTIDPALRPE) lines the NAD(+) pocket. Arg96, Arg106, Arg134, and Asp224 together coordinate substrate. Mg(2+)-binding residues include Asp224, Asp248, and Asp252. 282–294 (GSAPDIAGQGVAN) contacts NAD(+).

Belongs to the isocitrate and isopropylmalate dehydrogenases family. LeuB type 1 subfamily. In terms of assembly, homodimer. Mg(2+) is required as a cofactor. The cofactor is Mn(2+).

The protein resides in the cytoplasm. The catalysed reaction is (2R,3S)-3-isopropylmalate + NAD(+) = 4-methyl-2-oxopentanoate + CO2 + NADH. The protein operates within amino-acid biosynthesis; L-leucine biosynthesis; L-leucine from 3-methyl-2-oxobutanoate: step 3/4. Catalyzes the oxidation of 3-carboxy-2-hydroxy-4-methylpentanoate (3-isopropylmalate) to 3-carboxy-4-methyl-2-oxopentanoate. The product decarboxylates to 4-methyl-2 oxopentanoate. The chain is 3-isopropylmalate dehydrogenase from Xylella fastidiosa (strain 9a5c).